Reading from the N-terminus, the 424-residue chain is O-methyltransferase aunD (424 aa).

Position 275 (Asp-275) interacts with S-adenosyl-L-methionine. The Proton acceptor role is filled by His-326.

Belongs to the class I-like SAM-binding methyltransferase superfamily. Cation-independent O-methyltransferase family.

The protein operates within secondary metabolite biosynthesis. O-methyltransferase; part of the gene cluster that mediates the biosynthesis of aurasperone B, a dimeric gamma-naphthopyrone. The first step in the biosynthesis of aurasperone B is the production of gamma-naphthopyrone precursor YWA1 by the non-reducing polyketide synthase albA, via condensation of one acetyl-CoA starter unit with 6 malonyl-CoA units. YWA1 is then methylated by aunE at position C-6 to yield foncesin which is further methylated at position C-8 by aunD to produce fonsecin B. A key enzyme in the biosynthetic pathway is the cytochrome P450 monooxygenase aunB which catalyzes the oxidative dimerization of fonsecin B to aurasperone B. AunB also catalyzes the oxidative dimerization of rubrofusarin B into aurasperone A. This is O-methyltransferase aunD from Aspergillus niger (strain ATCC 1015 / CBS 113.46 / FGSC A1144 / LSHB Ac4 / NCTC 3858a / NRRL 328 / USDA 3528.7).